The following is a 394-amino-acid chain: F-box/kelch-repeat protein At1g23390 (394 aa).

Residues Glu15–Pro62 enclose the F-box domain. Kelch repeat units follow at residues Phe65–His111, Ser155–Ser204, Ala206–Phe252, and Met321–Ala369.

The polypeptide is F-box/kelch-repeat protein At1g23390 (Arabidopsis thaliana (Mouse-ear cress)).